The sequence spans 252 residues: Small ribosomal subunit protein eS4 (252 aa).

In terms of domain architecture, S4 RNA-binding spans Phe43 to Val105.

This sequence belongs to the eukaryotic ribosomal protein eS4 family.

This Staphylothermus marinus (strain ATCC 43588 / DSM 3639 / JCM 9404 / F1) protein is Small ribosomal subunit protein eS4.